We begin with the raw amino-acid sequence, 262 residues long: Tryptophan synthase alpha chain (262 aa).

Catalysis depends on proton acceptor residues Glu52 and Asp63.

Belongs to the TrpA family. In terms of assembly, tetramer of two alpha and two beta chains.

The enzyme catalyses (1S,2R)-1-C-(indol-3-yl)glycerol 3-phosphate + L-serine = D-glyceraldehyde 3-phosphate + L-tryptophan + H2O. It participates in amino-acid biosynthesis; L-tryptophan biosynthesis; L-tryptophan from chorismate: step 5/5. The alpha subunit is responsible for the aldol cleavage of indoleglycerol phosphate to indole and glyceraldehyde 3-phosphate. This is Tryptophan synthase alpha chain from Mycobacteroides abscessus (strain ATCC 19977 / DSM 44196 / CCUG 20993 / CIP 104536 / JCM 13569 / NCTC 13031 / TMC 1543 / L948) (Mycobacterium abscessus).